We begin with the raw amino-acid sequence, 197 residues long: Dephospho-CoA kinase (197 aa).

The 195-residue stretch at 3–197 (IIGLTGGIAS…IEEIWAKRFP (195 aa)) folds into the DPCK domain. 11–16 (ASGKST) contacts ATP.

The protein belongs to the CoaE family.

The protein resides in the cytoplasm. The catalysed reaction is 3'-dephospho-CoA + ATP = ADP + CoA + H(+). It participates in cofactor biosynthesis; coenzyme A biosynthesis; CoA from (R)-pantothenate: step 5/5. Its function is as follows. Catalyzes the phosphorylation of the 3'-hydroxyl group of dephosphocoenzyme A to form coenzyme A. The polypeptide is Dephospho-CoA kinase (Geobacter sulfurreducens (strain ATCC 51573 / DSM 12127 / PCA)).